We begin with the raw amino-acid sequence, 128 residues long: MGISMGKSMLVLLTFLAFASCCIAAYRPSETLCGGELVDTLQFVCGDRGFYFSRPASRVSRRSRGIVEECCFRSCDLALLETYCATPAKSERDVSASLAVLPDNFPRYPVGKFFQYDTWRQSTQRLRR.

An N-terminal signal peptide occupies residues 1-24 (MGISMGKSMLVLLTFLAFASCCIA). The interval 25–52 (AYRPSETLCGGELVDTLQFVCGDRGFYF) is b. Cystine bridges form between Cys-33–Cys-71, Cys-45–Cys-84, and Cys-70–Cys-75. Positions 53 to 64 (SRPASRVSRRSR) are c. The interval 65–85 (GIVEECCFRSCDLALLETYCA) is a. The d stretch occupies residues 86 to 91 (TPAKSE). Residues 92 to 128 (RDVSASLAVLPDNFPRYPVGKFFQYDTWRQSTQRLRR) constitute a propeptide, e peptide.

This sequence belongs to the insulin family. Interacts with MYORG; this interaction is required for IGF2 secretion. Interacts with integrins ITGAV:ITGB3 and ITGA6:ITGB4; integrin-binding is required for IGF2 signaling. Post-translationally, proteolytically processed by PCSK4, proIGF2 is cleaved at Arg-128 and Arg-92 to generate big-IGF2 and mature IGF2.

Its subcellular location is the secreted. The insulin-like growth factors possess growth-promoting activity. Major fetal growth hormone in mammals. Plays a key role in regulating fetoplacental development. IGF2 is influenced by placental lactogen. Also involved in tissue differentiation. In adults, involved in glucose metabolism in adipose tissue, skeletal muscle and liver. Acts as a ligand for integrin which is required for IGF2 signaling. Positively regulates myogenic transcription factor MYOD1 function by facilitating the recruitment of transcriptional coactivators, thereby controlling muscle terminal differentiation. Inhibits myoblast differentiation and metabolism via increasing the mitochondrial respiration rate. Its function is as follows. Preptin undergoes glucose-mediated co-secretion with insulin, and acts as a physiological amplifier of glucose-mediated insulin secretion. Exhibits osteogenic properties by increasing osteoblast mitogenic activity through phosphoactivation of MAPK1 and MAPK3. In Cavia porcellus (Guinea pig), this protein is Insulin-like growth factor 2.